The sequence spans 143 residues: MAREFSRTRRIAQQLQQELAQVLQRDMKDPRIGFVTVNDVDVSRDLSYAKVYVTFFEEDEKLVQEKVEALDAAAGYIRSLVAGRMKLRVMPELRFIYDSSLVEGMRMSNLVSRVISDDEAKQKQHGDQQDVSQSSDDKSEGED.

Residues Ser-116–Gln-128 show a composition bias toward basic and acidic residues. Residues Ser-116–Asp-143 are disordered.

Belongs to the RbfA family. As to quaternary structure, monomer. Binds 30S ribosomal subunits, but not 50S ribosomal subunits or 70S ribosomes.

It is found in the cytoplasm. Functionally, one of several proteins that assist in the late maturation steps of the functional core of the 30S ribosomal subunit. Associates with free 30S ribosomal subunits (but not with 30S subunits that are part of 70S ribosomes or polysomes). Required for efficient processing of 16S rRNA. May interact with the 5'-terminal helix region of 16S rRNA. The protein is Ribosome-binding factor A of Shewanella sediminis (strain HAW-EB3).